Here is a 353-residue protein sequence, read N- to C-terminus: tRNA-specific 2-thiouridylase MnmA 2 (353 aa).

6–13 (LLSGGVDS) contributes to the ATP binding site. The segment at 92–94 (NPD) is interaction with target base in tRNA. The Nucleophile role is filled by Cys-97. Cys-97 and Cys-192 are oxidised to a cystine. Residue Gly-120 participates in ATP binding. The interval 142–144 (KDQ) is interaction with tRNA. Cys-192 serves as the catalytic Cysteine persulfide intermediate.

Belongs to the MnmA/TRMU family.

It is found in the cytoplasm. The enzyme catalyses S-sulfanyl-L-cysteinyl-[protein] + uridine(34) in tRNA + AH2 + ATP = 2-thiouridine(34) in tRNA + L-cysteinyl-[protein] + A + AMP + diphosphate + H(+). Functionally, catalyzes the 2-thiolation of uridine at the wobble position (U34) of tRNA, leading to the formation of s(2)U34. In Bacteroides fragilis (strain YCH46), this protein is tRNA-specific 2-thiouridylase MnmA 2.